Consider the following 957-residue polypeptide: Glycine dehydrogenase (decarboxylating) (957 aa).

Lys702 is subject to N6-(pyridoxal phosphate)lysine.

This sequence belongs to the GcvP family. As to quaternary structure, the glycine cleavage system is composed of four proteins: P, T, L and H. Pyridoxal 5'-phosphate serves as cofactor.

The enzyme catalyses N(6)-[(R)-lipoyl]-L-lysyl-[glycine-cleavage complex H protein] + glycine + H(+) = N(6)-[(R)-S(8)-aminomethyldihydrolipoyl]-L-lysyl-[glycine-cleavage complex H protein] + CO2. Its function is as follows. The glycine cleavage system catalyzes the degradation of glycine. The P protein binds the alpha-amino group of glycine through its pyridoxal phosphate cofactor; CO(2) is released and the remaining methylamine moiety is then transferred to the lipoamide cofactor of the H protein. This chain is Glycine dehydrogenase (decarboxylating), found in Bradyrhizobium sp. (strain ORS 278).